Consider the following 627-residue polypeptide: Plastin-3 (627 aa).

2 EF-hand domains span residues 8-43 (EELE…ANLP) and 48-83 (KVRE…LKSG). The Ca(2+) site is built by Asp21, Asn23, Asn25, Glu32, Asp61, Asn63, Asp65, Met67, and Glu72. Actin-binding regions lie at residues 105–378 (TSEL…ALTK) and 379–624 (PENQ…GRGM). 4 consecutive Calponin-homology (CH) domains span residues 119-235 (EEER…KIGL), 263-374 (LSPE…NKYP), 393-503 (TREE…RRYT), and 515-624 (KVND…GRGM).

It is found in the cytoplasm. Its function is as follows. Actin-bundling protein. This is Plastin-3 (pls3) from Danio rerio (Zebrafish).